Here is a 517-residue protein sequence, read N- to C-terminus: 2-isopropylmalate synthase (517 aa).

The Pyruvate carboxyltransferase domain maps to 5-267 (VIIFDTTLRD…HTNVRCQEIY (263 aa)). Mn(2+) contacts are provided by aspartate 14, histidine 202, histidine 204, and asparagine 238. Residues 392 to 517 (RLKCFHVDSS…QRKYIKKNNN (126 aa)) are regulatory domain.

Belongs to the alpha-IPM synthase/homocitrate synthase family. LeuA type 1 subfamily. Homodimer. Mn(2+) serves as cofactor.

Its subcellular location is the cytoplasm. The enzyme catalyses 3-methyl-2-oxobutanoate + acetyl-CoA + H2O = (2S)-2-isopropylmalate + CoA + H(+). The protein operates within amino-acid biosynthesis; L-leucine biosynthesis; L-leucine from 3-methyl-2-oxobutanoate: step 1/4. In terms of biological role, catalyzes the condensation of the acetyl group of acetyl-CoA with 3-methyl-2-oxobutanoate (2-ketoisovalerate) to form 3-carboxy-3-hydroxy-4-methylpentanoate (2-isopropylmalate). In Blochmanniella pennsylvanica (strain BPEN), this protein is 2-isopropylmalate synthase.